Consider the following 240-residue polypeptide: Mannosyl-D-glycerate transport/metabolism system repressor MngR (240 aa).

Positions 4–72 (KPLYRQIADR…QGSGTYVKEE (69 aa)) constitute an HTH gntR-type domain. The H-T-H motif DNA-binding region spans 32 to 51 (ESALQTEFGVSRVTVRQALR).

Its function is as follows. Represses mngA and mngB. Regulates its own expression. The sequence is that of Mannosyl-D-glycerate transport/metabolism system repressor MngR (mngR) from Escherichia coli (strain K12).